The chain runs to 213 residues: ATP-dependent dethiobiotin synthetase BioD (213 aa).

12 to 17 (EVGKTY) lines the ATP pocket. Threonine 16 is a Mg(2+) binding site. The active site involves lysine 37. Residues aspartate 46, 107–110 (EGVG), and 167–168 (NN) each bind ATP. Aspartate 46 and glutamate 107 together coordinate Mg(2+).

Belongs to the dethiobiotin synthetase family. Homodimer. It depends on Mg(2+) as a cofactor.

It is found in the cytoplasm. The enzyme catalyses (7R,8S)-7,8-diammoniononanoate + CO2 + ATP = (4R,5S)-dethiobiotin + ADP + phosphate + 3 H(+). Its pathway is cofactor biosynthesis; biotin biosynthesis; biotin from 7,8-diaminononanoate: step 1/2. In terms of biological role, catalyzes a mechanistically unusual reaction, the ATP-dependent insertion of CO2 between the N7 and N8 nitrogen atoms of 7,8-diaminopelargonic acid (DAPA, also called 7,8-diammoniononanoate) to form a ureido ring. This Akkermansia muciniphila (strain ATCC BAA-835 / DSM 22959 / JCM 33894 / BCRC 81048 / CCUG 64013 / CIP 107961 / Muc) protein is ATP-dependent dethiobiotin synthetase BioD.